The primary structure comprises 464 residues: Cysteine--tRNA ligase (464 aa).

Cys-27 serves as a coordination point for Zn(2+). The short motif at 29–39 is the 'HIGH' region element; it reads PTVYNYFHIGN. Zn(2+) contacts are provided by Cys-207, His-232, and Glu-236. The short motif at 264–268 is the 'KMSKS' region element; sequence KMSKS. Position 267 (Lys-267) interacts with ATP.

It belongs to the class-I aminoacyl-tRNA synthetase family. As to quaternary structure, monomer. Zn(2+) serves as cofactor.

The protein resides in the cytoplasm. The enzyme catalyses tRNA(Cys) + L-cysteine + ATP = L-cysteinyl-tRNA(Cys) + AMP + diphosphate. In Alkaliphilus oremlandii (strain OhILAs) (Clostridium oremlandii (strain OhILAs)), this protein is Cysteine--tRNA ligase.